The primary structure comprises 1384 residues: CHD3-type chromatin-remodeling factor PICKLE (1384 aa).

The residue at position 23 (S23) is a Phosphoserine. Residues 49-96 (ENACQACGESTNLVSCNTCTYAFHAKCLVPPLKDASVENWRCPECVSP) form a PHD-type zinc finger. Chromo domains lie at 98 to 180 (NEID…NSED) and 190 to 249 (TTVD…RSKD). Residues 285-471 (RFSWSKQTHV…FMLMHFLDAG (187 aa)) form the Helicase ATP-binding domain. 298 to 305 (DEMGLGKT) lines the ATP pocket. A Nuclear localization signal motif is present at residues 376-383 (KKKKSGQI). The DEAH box motif lies at 422–425 (DEGH). The Helicase C-terminal domain occupies 599–760 (LLDKMMVKLK…NINQEELDDI (162 aa)). Residues 893 to 912 (AGLEDVSSDGDESYEAESTD) show a composition bias toward acidic residues. Disordered stretches follow at residues 893 to 941 (AGLE…TPLM), 1122 to 1152 (GLQG…NNNA), 1313 to 1344 (SDQS…PLRG), and 1365 to 1384 (VDVK…MVVD). A compositionally biased stretch (polar residues) spans 1138 to 1152 (TNQNPGSVITGNNNA). Basic and acidic residues-rich tracts occupy residues 1316 to 1341 (SKSH…ETKP) and 1367 to 1384 (VKME…MVVD).

This sequence belongs to the SNF2/RAD54 helicase family. In terms of assembly, interacts with TAF12B. As to expression, mostly expressed in tissue undergoing significant differentiation (meristems and primordia) such as young seedlings, influorescent tissue and young siliques, but not in endosperm and seed coat (at protein level). Levels decrease as organs age. Also present in trichomes.

It is found in the nucleus. Functionally, chromatin remodeling factor that represses the expression of embryonic trait genes (such as NFYB9/LEC1) upon and after seed germination and thus enables the developmental switch to post-germinative growth. Silences some MADS-box proteins such as PHE1 and PHE2. Plays a role during carpel differentiation. Regulates late processes in cytokinin signaling. This is CHD3-type chromatin-remodeling factor PICKLE (PKL) from Arabidopsis thaliana (Mouse-ear cress).